Consider the following 396-residue polypeptide: Elongation factor Tu (396 aa).

Residues 10–206 enclose the tr-type G domain; sequence KPHVNVGTIG…ALDTYIPTPE (197 aa). The interval 19–26 is G1; it reads GHVDHGKT. 19-26 lines the GTP pocket; it reads GHVDHGKT. Thr-26 provides a ligand contact to Mg(2+). Residues 60 to 64 are G2; the sequence is GITIN. Residues 81–84 are G3; sequence DCPG. Residues 81–85 and 136–139 each bind GTP; these read DCPGH and NKCD. The interval 136–139 is G4; it reads NKCD. The G5 stretch occupies residues 174–176; it reads SAK.

This sequence belongs to the TRAFAC class translation factor GTPase superfamily. Classic translation factor GTPase family. EF-Tu/EF-1A subfamily. As to quaternary structure, monomer.

The protein resides in the cytoplasm. The enzyme catalyses GTP + H2O = GDP + phosphate + H(+). GTP hydrolase that promotes the GTP-dependent binding of aminoacyl-tRNA to the A-site of ribosomes during protein biosynthesis. This chain is Elongation factor Tu, found in Polynucleobacter asymbioticus (strain DSM 18221 / CIP 109841 / QLW-P1DMWA-1) (Polynucleobacter necessarius subsp. asymbioticus).